A 72-amino-acid chain; its full sequence is uncharacterized protein (72 aa).

This is an uncharacterized protein from Saccharomyces cerevisiae (strain ATCC 204508 / S288c) (Baker's yeast).